We begin with the raw amino-acid sequence, 593 residues long: NADH-quinone oxidoreductase subunit C/D (593 aa).

The tract at residues 1-184 (MTADTAVSIP…DPFSLTLAKQ (184 aa)) is NADH dehydrogenase I subunit C. An NADH dehydrogenase I subunit D region spans residues 208–593 (DYMFLNLGPN…IDFVMADVDR (386 aa)).

In the N-terminal section; belongs to the complex I 30 kDa subunit family. It in the C-terminal section; belongs to the complex I 49 kDa subunit family. As to quaternary structure, NDH-1 is composed of 13 different subunits. Subunits NuoB, CD, E, F, and G constitute the peripheral sector of the complex.

The protein localises to the cell inner membrane. It catalyses the reaction a quinone + NADH + 5 H(+)(in) = a quinol + NAD(+) + 4 H(+)(out). NDH-1 shuttles electrons from NADH, via FMN and iron-sulfur (Fe-S) centers, to quinones in the respiratory chain. The immediate electron acceptor for the enzyme in this species is believed to be ubiquinone. Couples the redox reaction to proton translocation (for every two electrons transferred, four hydrogen ions are translocated across the cytoplasmic membrane), and thus conserves the redox energy in a proton gradient. This chain is NADH-quinone oxidoreductase subunit C/D, found in Ectopseudomonas mendocina (strain ymp) (Pseudomonas mendocina).